A 525-amino-acid chain; its full sequence is Acyl-lipid (9-3)-desaturase (525 aa).

A Cytochrome b5 heme-binding domain is found at 102-176 (KSTHPLSEVA…LQDFYIGDVE (75 aa)). Heme-binding residues include His-137 and His-159. Residues 216-236 (VAIFAASIAIICWSKTISAVL) traverse the membrane as a helical segment. Positions 254–258 (HDFLH) match the Histidine box-1 motif. A helical transmembrane segment spans residues 266 to 286 (WLNEVVGYVIGNAVLGFSTGW). Positions 291-295 (HNLHH) match the Histidine box-2 motif. The next 3 membrane-spanning stretches (helical) occupy residues 340–360 (QHLF…FWSW), 378–398 (GTVL…LPGW), and 401–421 (LVWM…VFVL). The Histidine box-3 signature appears at 462–466 (QIEHH).

It belongs to the fatty acid desaturase type 1 family.

Its subcellular location is the membrane. It catalyses the reaction (9Z,12Z,15Z)-octadecatrienoyl-containing glycerolipid + 2 Fe(II)-[cytochrome b5] + O2 + 2 H(+) = (6Z,9Z,12Z,15Z)-octadecatetraenoyl-containing glycerolipid + 2 Fe(III)-[cytochrome b5] + 2 H2O. The catalysed reaction is a (9Z,12Z)-octadecadienoyl-containing glycerolipid + 2 Fe(II)-[cytochrome b5] + O2 + 2 H(+) = (6Z,9Z,12Z)-octadecatrienoyl-containing glycerolipid + 2 Fe(III)-[cytochrome b5] + 2 H2O. The protein operates within lipid metabolism; polyunsaturated fatty acid biosynthesis. In terms of biological role, fatty acid desaturase able to introduce a delta(6)-double bond into delta(9)-unsaturated fatty-acid substrates. Can use both linoleic acid (18:2(9Z,12Z)) and alpha-linolenic acid (18:3(9Z,12Z,15Z)) as substrates. Required for the biosynthesis of arachidonic acid (20:4(5z,8Z,11Z,14Z)). The protein is Acyl-lipid (9-3)-desaturase of Physcomitrium patens (Spreading-leaved earth moss).